Reading from the N-terminus, the 230-residue chain is Flagellar L-ring protein (230 aa).

Residues 1 to 15 form the signal peptide; sequence MSRLPSLSRLCLAIA. The N-palmitoyl cysteine moiety is linked to residue C16. Residue C16 is the site of S-diacylglycerol cysteine attachment.

Belongs to the FlgH family. In terms of assembly, the basal body constitutes a major portion of the flagellar organelle and consists of four rings (L,P,S, and M) mounted on a central rod.

It is found in the cell outer membrane. Its subcellular location is the bacterial flagellum basal body. Its function is as follows. Assembles around the rod to form the L-ring and probably protects the motor/basal body from shearing forces during rotation. In Xanthomonas euvesicatoria pv. vesicatoria (strain 85-10) (Xanthomonas campestris pv. vesicatoria), this protein is Flagellar L-ring protein.